A 618-amino-acid chain; its full sequence is Medium-chain acyl-CoA ligase ACSF2, mitochondrial (618 aa).

The transit peptide at 1-44 (MRATAAYVGMLRLGRMCAGSPGVLGARAALSRSWQEARLQAVRF) directs the protein to the mitochondrion. K182 is subject to N6-acetyllysine. K185 carries the post-translational modification N6-acetyllysine; alternate. N6-succinyllysine; alternate is present on K185. 266–274 (TSGTTGSPK) contacts ATP. Residues K343 and K401 each carry the N6-acetyllysine modification. K481 bears the N6-succinyllysine mark. Residues D496 and R511 each coordinate ATP. N6-acetyllysine is present on K513. Residues K547 and K573 each carry the N6-acetyllysine; alternate modification. Residues K547 and K573 each carry the N6-succinyllysine; alternate modification. K602 contacts ATP. At K602 the chain carries N6-succinyllysine.

Belongs to the ATP-dependent AMP-binding enzyme family.

It is found in the mitochondrion. It catalyses the reaction a medium-chain fatty acid + ATP + CoA = a medium-chain fatty acyl-CoA + AMP + diphosphate. The enzyme catalyses octanoate + ATP + CoA = octanoyl-CoA + AMP + diphosphate. Acyl-CoA synthases catalyze the initial reaction in fatty acid metabolism, by forming a thioester with CoA. Has some preference toward medium-chain substrates. Plays a role in adipocyte differentiation. This chain is Medium-chain acyl-CoA ligase ACSF2, mitochondrial, found in Macaca fascicularis (Crab-eating macaque).